The sequence spans 335 residues: 3-hydroxyisobutyrate dehydrogenase, mitochondrial (335 aa).

Residues 1-35 (MAASLGFRGAASGLRYWSGRRRPVGSLAAVCSRSM) constitute a mitochondrion transit peptide. 39–68 (TPVGFIGLGNMGNPMAKNLIKHGYPLILYD) provides a ligand contact to NAD(+). An N6-acetyllysine; alternate mark is found at lysine 59 and lysine 75. Residues lysine 59 and lysine 75 each carry the N6-succinyllysine; alternate modification. At lysine 94 the chain carries N6-succinyllysine. Residues 102–103 (LP) and asparagine 107 contribute to the NAD(+) site. Lysine 120 is modified (N6-acetyllysine). Threonine 133 contacts NAD(+). Lysine 140 is modified (N6-succinyllysine). Lysine 144 carries the N6-acetyllysine modification. An N6-acetyllysine; alternate modification is found at lysine 148. N6-succinyllysine; alternate is present on lysine 148. Lysine 208 is an active-site residue. Lysine 237 and lysine 241 each carry N6-acetyllysine; alternate. An N6-succinyllysine; alternate mark is found at lysine 237 and lysine 241. Lysine 283 contacts NAD(+). At lysine 296 the chain carries N6-succinyllysine. Lysine 320 carries the post-translational modification N6-acetyllysine; alternate. Lysine 320 carries the post-translational modification N6-succinyllysine; alternate.

Belongs to the HIBADH-related family. 3-hydroxyisobutyrate dehydrogenase subfamily. As to quaternary structure, homodimer. Higher level in kidney, liver, and heart than in muscle.

It is found in the mitochondrion. It catalyses the reaction 3-hydroxy-2-methylpropanoate + NAD(+) = 2-methyl-3-oxopropanoate + NADH + H(+). It functions in the pathway amino-acid degradation; L-valine degradation. The protein is 3-hydroxyisobutyrate dehydrogenase, mitochondrial (Hibadh) of Rattus norvegicus (Rat).